The sequence spans 251 residues: CCN family member 5 (251 aa).

A signal peptide spans 1–23 (MRGNPLIHLLAISFLCILSMVYS). The 80-residue stretch at 24 to 103 (QLCPAPCACP…EEDDGSCEVN (80 aa)) folds into the IGFBP N-terminal domain. 6 disulfides stabilise this stretch: cysteine 26-cysteine 50, cysteine 30-cysteine 52, cysteine 32-cysteine 53, cysteine 39-cysteine 56, cysteine 64-cysteine 78, and cysteine 70-cysteine 100. Residues 98-164 (GSCEVNGRRY…GRCCPEWVCD (67 aa)) form the VWFC domain. In terms of domain architecture, TSP type-1 spans 195–239 (CPNWSTAWGPCSTTCGLGIATRVSNQNRFCQLEIQRRLCLSRPCL). The N-linked (GlcNAc...) asparagine glycan is linked to asparagine 197.

This sequence belongs to the CCN family.

It is found in the secreted. In terms of biological role, may play an important role in modulating bone turnover. Promotes the adhesion of osteoblast cells and inhibits the binding of fibrinogen to integrin receptors. In addition, inhibits osteocalcin production. The chain is CCN family member 5 (Ccn5) from Mus musculus (Mouse).